The following is a 351-amino-acid chain: Methionine import ATP-binding protein MetN (351 aa).

Positions 2–241 (IELRNVTKTY…PKTEIAKKFT (240 aa)) constitute an ABC transporter domain. 38 to 45 (GKSGAGKS) serves as a coordination point for ATP.

The protein belongs to the ABC transporter superfamily. Methionine importer (TC 3.A.1.24) family. As to quaternary structure, the complex is composed of two ATP-binding proteins (MetN), two transmembrane proteins (MetI) and a solute-binding protein (MetQ).

It is found in the cell inner membrane. It carries out the reaction L-methionine(out) + ATP + H2O = L-methionine(in) + ADP + phosphate + H(+). The enzyme catalyses D-methionine(out) + ATP + H2O = D-methionine(in) + ADP + phosphate + H(+). Its function is as follows. Part of the ABC transporter complex MetNIQ involved in methionine import. Responsible for energy coupling to the transport system. In Coxiella burnetii (strain RSA 493 / Nine Mile phase I), this protein is Methionine import ATP-binding protein MetN.